The sequence spans 152 residues: Transcriptional regulator MraZ (152 aa).

SpoVT-AbrB domains lie at 5–52 (ATLV…TLPE) and 81–124 (ASEC…DETT).

It belongs to the MraZ family. In terms of assembly, forms oligomers.

The protein resides in the cytoplasm. It localises to the nucleoid. Functionally, negatively regulates its own expression and that of the subsequent genes in the proximal part of the division and cell wall (dcw) gene cluster. Acts by binding directly to DNA. May also regulate the expression of genes outside the dcw cluster. This Enterobacter sp. (strain 638) protein is Transcriptional regulator MraZ.